We begin with the raw amino-acid sequence, 388 residues long: F-box protein At4g00893 (388 aa).

A disordered region spans residues 1–30 (MLPSPSVHMASPPPSLNMASHPPSPATASR). An F-box domain is found at 42-88 (NPSFADLPSSLIEEIMLLLVLKDNIRASAACKSWYEAGVSVRVVDKH).

In Arabidopsis thaliana (Mouse-ear cress), this protein is F-box protein At4g00893.